Consider the following 235-residue polypeptide: Sugar fermentation stimulation protein homolog (235 aa).

It belongs to the SfsA family.

The sequence is that of Sugar fermentation stimulation protein homolog from Pseudomonas aeruginosa (strain LESB58).